A 678-amino-acid chain; its full sequence is Sulfoquinovosidase (678 aa).

4 residues coordinate a 6-sulfo-alpha-D-quinovosyldiacylglycerol: Gln-288, Arg-301, Val-302, and Trp-304. Catalysis depends on Asp-405, which acts as the Nucleophile. Glu-408 is an active-site residue. The active-site Proton donor is the Asp-472. Residue His-537 participates in a 6-sulfo-alpha-D-quinovosyldiacylglycerol binding.

Belongs to the glycosyl hydrolase 31 family.

The catalysed reaction is a 6-sulfo-alpha-D-quinovosyldiacylglycerol + H2O = 6-sulfo-alpha-D-quinovose + a 1,2-diacyl-sn-glycerol. The enzyme catalyses 3-(6-sulfo-alpha-D-quinovosyl)glycerol + H2O = 6-sulfo-alpha-D-quinovose + glycerol. It functions in the pathway glycolipid metabolism. Is inactivated in vitro by the mechanism-based inactivator 5-fluoro-beta-L-idopyranosyl fluoride (5FIdoF) that yields a covalent glycosyl-enzyme complex with the active site nucleophile Asp-405. Catalyzes the hydrolysis of sulfoquinovosyl diacylglycerides (SQDG) to sulfoquinovose (SQ), which is then degraded by E.coli through the SQ Embden-Meyerhof-Parnas (SQ-EMP) sulfoglycolysis pathway as a source of carbon and sulfur. Therefore, is likely involved in the utilization of the sulfoquinovose headgroup found in ubiquitous plant sulfolipids. Is also able to hydrolyze simple sulfoquinovosides such as sulfoquinovosyl glycerol (SQGro). In vitro, can use the substrate analog para-nitrophenyl alpha-sulfoquinovoside (PNPSQ), but shows no detectable activity toward 4-nitrophenyl alpha-D-glucopyranoside (PNPGlc). Is a retaining glycoside hydrolase, since it forms the alpha anomer of SQ. Also exhibits some alpha-glucosidase activity against alpha-glucosyl fluoride in vitro, although natural substrates, such as alpha-glucobioses are scarcely hydrolyzed. This is Sulfoquinovosidase from Escherichia coli (strain K12).